The sequence spans 71 residues: uncharacterized protein (71 aa).

Basic residues predominate over residues 1–10; that stretch reads MHRKKRKKEK. The interval 1–20 is disordered; the sequence is MHRKKRKKEKKRTEKDNTTN. A helical transmembrane segment spans residues 21 to 43; it reads LPPLFLFPCSLSLPTLLAPVHYI.

The protein resides in the membrane. This is an uncharacterized protein from Saccharomyces cerevisiae (strain ATCC 204508 / S288c) (Baker's yeast).